Reading from the N-terminus, the 283-residue chain is Pantothenate synthetase (283 aa).

Methionine 26–histidine 33 contacts ATP. The Proton donor role is filled by histidine 33. Glutamine 57 contacts (R)-pantoate. Glutamine 57 provides a ligand contact to beta-alanine. Residue glycine 144 to aspartate 147 participates in ATP binding. Glutamine 150 serves as a coordination point for (R)-pantoate. ATP is bound by residues isoleucine 173 and leucine 181–arginine 184.

Belongs to the pantothenate synthetase family. As to quaternary structure, homodimer.

The protein localises to the cytoplasm. It carries out the reaction (R)-pantoate + beta-alanine + ATP = (R)-pantothenate + AMP + diphosphate + H(+). Its pathway is cofactor biosynthesis; (R)-pantothenate biosynthesis; (R)-pantothenate from (R)-pantoate and beta-alanine: step 1/1. Its function is as follows. Catalyzes the condensation of pantoate with beta-alanine in an ATP-dependent reaction via a pantoyl-adenylate intermediate. This Polynucleobacter necessarius subsp. necessarius (strain STIR1) protein is Pantothenate synthetase.